The primary structure comprises 65 residues: Hirudin-2' (65 aa).

The interaction with thrombin active site stretch occupies residues isoleucine 1 to tyrosine 3. 3 cysteine pairs are disulfide-bonded: cysteine 6-cysteine 14, cysteine 16-cysteine 28, and cysteine 22-cysteine 39. Residues cysteine 39–glutamine 65 form a disordered region. A glycan (O-linked (GalNAc...) threonine) is linked at threonine 45. The tract at residues aspartate 55–glutamine 65 is interaction with fibrinogen-binding exosite of thrombin. The span at aspartate 55–glutamine 65 shows a compositional bias: acidic residues. Residue tyrosine 63 is modified to Sulfotyrosine.

The protein belongs to the protease inhibitor I14 (hirudin) family.

The protein resides in the secreted. Hirudin is a potent thrombin-specific protease inhibitor. It forms a stable non-covalent complex with alpha-thrombin, thereby abolishing its ability to cleave fibrinogen. This is Hirudin-2' from Hirudo medicinalis (Medicinal leech).